The sequence spans 344 residues: MKTQWNFEKVKELFDQPFFDILFLAQNIHRKNFNANQIQISTLLSIKTGACPEDCKYCPQSARYKTNIKIEKLLTLKQILKSAQQAKKLGSTRFCMGAAWKNPKERDMHFLKTVIQEVKKLGLETCMTLGTLHNDQADRLAKAGLDFYNHNLDTSKSYYQKIVTTRTYQDRLNTLKKVRKSGMKICSGGILGLGEKLKDRIELLIELSNLEIAPESIPINMLVKVKGTPLENQTSIDTFDFIKTIAITRIMMPTSYIRLSAGRENMNEQTQAMCFLSGANSIFYGCKLLTTPNPKKERDKQLFSKLGLNIKHKNTNLNYSILSDNSLNYTSKIHSQQFYNAETA.

The Radical SAM core domain occupies 36-260; that stretch reads NQIQISTLLS…MMPTSYIRLS (225 aa). Residues cysteine 51, cysteine 55, and cysteine 58 each contribute to the [4Fe-4S] cluster site. [2Fe-2S] cluster contacts are provided by cysteine 95, cysteine 126, cysteine 186, and arginine 258.

Belongs to the radical SAM superfamily. Biotin synthase family. As to quaternary structure, homodimer. [4Fe-4S] cluster serves as cofactor. It depends on [2Fe-2S] cluster as a cofactor.

It carries out the reaction (4R,5S)-dethiobiotin + (sulfur carrier)-SH + 2 reduced [2Fe-2S]-[ferredoxin] + 2 S-adenosyl-L-methionine = (sulfur carrier)-H + biotin + 2 5'-deoxyadenosine + 2 L-methionine + 2 oxidized [2Fe-2S]-[ferredoxin]. Its pathway is cofactor biosynthesis; biotin biosynthesis; biotin from 7,8-diaminononanoate: step 2/2. Its function is as follows. Catalyzes the conversion of dethiobiotin (DTB) to biotin by the insertion of a sulfur atom into dethiobiotin via a radical-based mechanism. In Buchnera aphidicola subsp. Baizongia pistaciae (strain Bp), this protein is Biotin synthase.